A 504-amino-acid polypeptide reads, in one-letter code: Probable cytosol aminopeptidase (504 aa).

Mn(2+)-binding residues include K263 and D268. K275 is a catalytic residue. Positions 286, 345, and 347 each coordinate Mn(2+). R349 is an active-site residue.

This sequence belongs to the peptidase M17 family. It depends on Mn(2+) as a cofactor.

It localises to the cytoplasm. It carries out the reaction Release of an N-terminal amino acid, Xaa-|-Yaa-, in which Xaa is preferably Leu, but may be other amino acids including Pro although not Arg or Lys, and Yaa may be Pro. Amino acid amides and methyl esters are also readily hydrolyzed, but rates on arylamides are exceedingly low.. The catalysed reaction is Release of an N-terminal amino acid, preferentially leucine, but not glutamic or aspartic acids.. Its function is as follows. Presumably involved in the processing and regular turnover of intracellular proteins. Catalyzes the removal of unsubstituted N-terminal amino acids from various peptides. The polypeptide is Probable cytosol aminopeptidase (Sulfurihydrogenibium sp. (strain YO3AOP1)).